The sequence spans 72 residues: Translation initiation factor IF-1 (72 aa).

Residues 1–72 form the S1-like domain; it reads MSKDDCIEFE…TKGRIIYRMK (72 aa).

Belongs to the IF-1 family. As to quaternary structure, component of the 30S ribosomal translation pre-initiation complex which assembles on the 30S ribosome in the order IF-2 and IF-3, IF-1 and N-formylmethionyl-tRNA(fMet); mRNA recruitment can occur at any time during PIC assembly.

It is found in the cytoplasm. Functionally, one of the essential components for the initiation of protein synthesis. Stabilizes the binding of IF-2 and IF-3 on the 30S subunit to which N-formylmethionyl-tRNA(fMet) subsequently binds. Helps modulate mRNA selection, yielding the 30S pre-initiation complex (PIC). Upon addition of the 50S ribosomal subunit IF-1, IF-2 and IF-3 are released leaving the mature 70S translation initiation complex. The chain is Translation initiation factor IF-1 from Xylella fastidiosa (strain 9a5c).